Reading from the N-terminus, the 508-residue chain is Maturase K (508 aa).

It belongs to the intron maturase 2 family. MatK subfamily.

The protein localises to the plastid. The protein resides in the chloroplast. Its function is as follows. Usually encoded in the trnK tRNA gene intron. Probably assists in splicing its own and other chloroplast group II introns. This chain is Maturase K, found in Coronilla varia (Crown vetch).